Reading from the N-terminus, the 79-residue chain is CDC42 small effector protein 1 (79 aa).

2 S-palmitoyl cysteine lipidation sites follow: cysteine 10 and cysteine 11. One can recognise a CRIB domain in the interval 30-43; it reads IGEPMNFVHLTHIG. The segment at 48–79 is disordered; it reads GAGDGLAMTGAVQEQMRSKGNRDRPWSNSRGL. Residues 63–72 show a composition bias toward basic and acidic residues; that stretch reads MRSKGNRDRP.

The protein belongs to the CDC42SE/SPEC family. Interacts with CDC42 (in GTP-bound form). Interacts weakly with RAC1 and not at all with RHOA.

The protein localises to the cytoplasm. Its subcellular location is the cytoskeleton. It is found in the cell membrane. Its function is as follows. Probably involved in the organization of the actin cytoskeleton by acting downstream of CDC42, inducing actin filament assembly. Alters CDC42-induced cell shape changes. In activated T-cells, may play a role in CDC42-mediated F-actin accumulation at the immunological synapse. May play a role in early contractile events in phagocytosis in macrophages. The sequence is that of CDC42 small effector protein 1 (CDC42SE1) from Pongo abelii (Sumatran orangutan).